The following is a 361-amino-acid chain: 3-dehydroquinate synthase (361 aa).

NAD(+) contacts are provided by residues 104–108 (GVIGD), 128–129 (TT), K141, K150, and 168–171 (FLRT). Residues E183, H246, and H263 each coordinate Zn(2+).

It belongs to the sugar phosphate cyclases superfamily. Dehydroquinate synthase family. Requires Co(2+) as cofactor. The cofactor is Zn(2+). NAD(+) serves as cofactor.

It localises to the cytoplasm. It carries out the reaction 7-phospho-2-dehydro-3-deoxy-D-arabino-heptonate = 3-dehydroquinate + phosphate. It participates in metabolic intermediate biosynthesis; chorismate biosynthesis; chorismate from D-erythrose 4-phosphate and phosphoenolpyruvate: step 2/7. Functionally, catalyzes the conversion of 3-deoxy-D-arabino-heptulosonate 7-phosphate (DAHP) to dehydroquinate (DHQ). In Opitutus terrae (strain DSM 11246 / JCM 15787 / PB90-1), this protein is 3-dehydroquinate synthase.